A 173-amino-acid polypeptide reads, in one-letter code: Large ribosomal subunit protein uL16 (173 aa).

The protein belongs to the universal ribosomal protein uL16 family.

This chain is Large ribosomal subunit protein uL16, found in Methanosarcina mazei (strain ATCC BAA-159 / DSM 3647 / Goe1 / Go1 / JCM 11833 / OCM 88) (Methanosarcina frisia).